A 196-amino-acid polypeptide reads, in one-letter code: Peptide methionine sulfoxide reductase MsrA 2 (196 aa).

C36 is an active-site residue.

Belongs to the MsrA Met sulfoxide reductase family.

The catalysed reaction is L-methionyl-[protein] + [thioredoxin]-disulfide + H2O = L-methionyl-(S)-S-oxide-[protein] + [thioredoxin]-dithiol. The enzyme catalyses [thioredoxin]-disulfide + L-methionine + H2O = L-methionine (S)-S-oxide + [thioredoxin]-dithiol. Its function is as follows. Has an important function as a repair enzyme for proteins that have been inactivated by oxidation. Catalyzes the reversible oxidation-reduction of methionine sulfoxide in proteins to methionine. This is Peptide methionine sulfoxide reductase MsrA 2 (msrA2) from Caulobacter vibrioides (strain ATCC 19089 / CIP 103742 / CB 15) (Caulobacter crescentus).